Reading from the N-terminus, the 363-residue chain is uncharacterized protein (363 aa).

The stretch at 109–329 (RAALRELRSR…VEELQAQTRE (221 aa)) forms a coiled coil.

This is an uncharacterized protein from Homo sapiens (Human).